Consider the following 107-residue polypeptide: Ferredoxin 1 (107 aa).

4Fe-4S ferredoxin-type domains lie at 2-30 and 31-60; these read TFVVTDNCIKCKYTDCVEVCPVDCFYEGP and NFLVIHPDECIDCALCEPECPAQAIFSEDE. Residues Cys-9 and Cys-17 each coordinate [3Fe-4S] cluster. Cys-21, Cys-40, Cys-43, and Cys-46 together coordinate [4Fe-4S] cluster. Cys-50 is a binding site for [3Fe-4S] cluster.

[4Fe-4S] cluster is required as a cofactor. It depends on [3Fe-4S] cluster as a cofactor.

In terms of biological role, ferredoxins are iron-sulfur proteins that transfer electrons in a wide variety of metabolic reactions. The protein is Ferredoxin 1 (fdxA) of Pseudomonas putida (strain ATCC 47054 / DSM 6125 / CFBP 8728 / NCIMB 11950 / KT2440).